A 187-amino-acid chain; its full sequence is Cytochrome b-245 chaperone 1 (187 aa).

The helical transmembrane segment at 20–42 threads the bilayer; that stretch reads GIRSWSLLVGILSTGLAAAYYSG. A disordered region spans residues 167-187; the sequence is ESPSERSQSSDSEPDGPGGQS. Phosphoserine occurs at positions 168 and 170.

Belongs to the CYBC1 family. As to quaternary structure, interacts with CYBB; CYBC1 may act as a chaperone stabilizing Cytochrome b-245 heterodimer.

The protein localises to the endoplasmic reticulum membrane. Functionally, functions as a chaperone necessary for a stable expression of the CYBA and CYBB subunits of the cytochrome b-245 heterodimer. Controls the phagocyte respiratory burst and is essential for innate immunity. The chain is Cytochrome b-245 chaperone 1 from Mus musculus (Mouse).